The sequence spans 237 residues: N-demethylindolmycin N-methyltransferase (237 aa).

The protein belongs to the methyltransferase superfamily.

It carries out the reaction N-demethylindolmycin + S-adenosyl-L-methionine = indolmycin + S-adenosyl-L-homocysteine + H(+). Its function is as follows. Involved in the biosynthesis of the antibiotic indolmycin, an inhibitor of the bacterial tryptophan-tRNA synthetases. Catalyzes the methylation of N-demethylindolmycin to yield indolmycin, with S-adenosylmethionine (AdoMet) acting as the methyl donor. This chain is N-demethylindolmycin N-methyltransferase, found in Streptomyces griseus.